A 186-amino-acid polypeptide reads, in one-letter code: Peptidyl-tRNA hydrolase (186 aa).

Y13 contributes to the tRNA binding site. Residue H18 is the Proton acceptor of the active site. Residues Y59, N61, and N107 each contribute to the tRNA site.

This sequence belongs to the PTH family. Monomer.

It localises to the cytoplasm. It catalyses the reaction an N-acyl-L-alpha-aminoacyl-tRNA + H2O = an N-acyl-L-amino acid + a tRNA + H(+). Functionally, hydrolyzes ribosome-free peptidyl-tRNAs (with 1 or more amino acids incorporated), which drop off the ribosome during protein synthesis, or as a result of ribosome stalling. Catalyzes the release of premature peptidyl moieties from peptidyl-tRNA molecules trapped in stalled 50S ribosomal subunits, and thus maintains levels of free tRNAs and 50S ribosomes. The sequence is that of Peptidyl-tRNA hydrolase from Thermotoga maritima (strain ATCC 43589 / DSM 3109 / JCM 10099 / NBRC 100826 / MSB8).